A 28-amino-acid chain; its full sequence is Conotoxin Cal6.43b (28 aa).

Cystine bridges form between Cys3/Cys13, Cys7/Cys19, and Cys12/Cys25.

Expressed by the venom duct.

The protein localises to the secreted. Functionally, probable neurotoxin with unknown target. Possibly targets ion channels. In Californiconus californicus (California cone), this protein is Conotoxin Cal6.43b.